The chain runs to 122 residues: MTSTVEFINRWQRIALLSQSLLELAQRGEWDLLLQQEVSYLQSIETVMEKQTPPGITRSIQDMVAGYIKQTLDNEQLLKGLLQQRLDELSSLIGQSTRQKSLNYAYGRLSGMLLVPDAPGAS.

Positions 1–50 (MTSTVEFINRWQRIALLSQSLLELAQRGEWDLLLQQEVSYLQSIETVMEK) are required for homodimerization. A fliD binding region spans residues 60-98 (IQDMVAGYIKQTLDNEQLLKGLLQQRLDELSSLIGQSTR).

It belongs to the FliT family. Homodimer. Interacts with FliD and FlhC.

It localises to the cytoplasm. Its subcellular location is the cytosol. In terms of biological role, dual-function protein that regulates the transcription of class 2 flagellar operons and that also acts as an export chaperone for the filament-capping protein FliD. As a transcriptional regulator, acts as an anti-FlhDC factor; it directly binds FlhC, thus inhibiting the binding of the FlhC/FlhD complex to class 2 promoters, resulting in decreased expression of class 2 flagellar operons. As a chaperone, effects FliD transition to the membrane by preventing its premature polymerization, and by directing it to the export apparatus. This Salmonella gallinarum (strain 287/91 / NCTC 13346) protein is Flagellar protein FliT.